Consider the following 161-residue polypeptide: Transcription antitermination protein NusB (161 aa).

The protein belongs to the NusB family.

In terms of biological role, involved in transcription antitermination. Required for transcription of ribosomal RNA (rRNA) genes. Binds specifically to the boxA antiterminator sequence of the ribosomal RNA (rrn) operons. The sequence is that of Transcription antitermination protein NusB from Nitrobacter winogradskyi (strain ATCC 25391 / DSM 10237 / CIP 104748 / NCIMB 11846 / Nb-255).